Consider the following 404-residue polypeptide: CCA-adding enzyme (404 aa).

ATP contacts are provided by G27 and R30. Positions 27 and 30 each coordinate CTP. Mg(2+) contacts are provided by D40 and D42. 5 residues coordinate ATP: R111, D154, R157, R160, and R163. R111, D154, R157, R160, and R163 together coordinate CTP.

It belongs to the tRNA nucleotidyltransferase/poly(A) polymerase family. Bacterial CCA-adding enzyme type 3 subfamily. As to quaternary structure, homodimer. Mg(2+) is required as a cofactor.

It catalyses the reaction a tRNA precursor + 2 CTP + ATP = a tRNA with a 3' CCA end + 3 diphosphate. The enzyme catalyses a tRNA with a 3' CCA end + 2 CTP + ATP = a tRNA with a 3' CCACCA end + 3 diphosphate. Functionally, catalyzes the addition and repair of the essential 3'-terminal CCA sequence in tRNAs without using a nucleic acid template. Adds these three nucleotides in the order of C, C, and A to the tRNA nucleotide-73, using CTP and ATP as substrates and producing inorganic pyrophosphate. tRNA 3'-terminal CCA addition is required both for tRNA processing and repair. Also involved in tRNA surveillance by mediating tandem CCA addition to generate a CCACCA at the 3' terminus of unstable tRNAs. While stable tRNAs receive only 3'-terminal CCA, unstable tRNAs are marked with CCACCA and rapidly degraded. The structural flexibility of RNA controls the choice between CCA versus CCACCA addition: following the first CCA addition cycle, nucleotide-binding to the active site triggers a clockwise screw motion, producing torque on the RNA. This ejects stable RNAs, whereas unstable RNAs are refolded while bound to the enzyme and subjected to a second CCA catalytic cycle. This Geobacillus stearothermophilus (Bacillus stearothermophilus) protein is CCA-adding enzyme.